We begin with the raw amino-acid sequence, 230 residues long: Probable septum site-determining protein MinC (230 aa).

Belongs to the MinC family. Interacts with MinD and FtsZ.

In terms of biological role, cell division inhibitor that blocks the formation of polar Z ring septums. Rapidly oscillates between the poles of the cell to destabilize FtsZ filaments that have formed before they mature into polar Z rings. Prevents FtsZ polymerization. In Cronobacter sakazakii (strain ATCC BAA-894) (Enterobacter sakazakii), this protein is Probable septum site-determining protein MinC.